The primary structure comprises 256 residues: Methylesterase 9 (256 aa).

Ser-78 serves as the catalytic Acyl-ester intermediate. Active-site charge relay system residues include Asp-206 and His-234.

The protein belongs to the AB hydrolase superfamily. Methylesterase family.

It carries out the reaction methyl (indol-3-yl)acetate + H2O = (indol-3-yl)acetate + methanol + H(+). The enzyme catalyses methyl (-)-jasmonate + H2O = jasmonate + methanol + H(+). The catalysed reaction is methyl salicylate + H2O = salicylate + methanol + H(+). The protein operates within plant hormone biosynthesis. Its pathway is lipid metabolism; oxylipin biosynthesis. Its activity is regulated as follows. Esterase activity is down-regulated by salicylic acid (SA). Functionally, methylesterase shown to have carboxylesterase activity, methyl indole-3-acetic acid (MeIAA) esterase activity, methyl salicylate (MeSA) esterase activity and methyl jasmonate (MeJA) esterase activity in vitro. Required to convert methyl salicylate (MeSA) to salicylic acid (SA) as part of the signal transduction pathways that activate systemic acquired resistance in systemic tissue. MeSA is believed to be an inactive form that needs to be demethylated to exert a biological effect. This Arabidopsis thaliana (Mouse-ear cress) protein is Methylesterase 9.